The following is an 849-amino-acid chain: Putative respiratory burst oxidase homolog protein G (849 aa).

The segment covering 1 to 17 (MQRVSFEVKDTEAEKSS) has biased composition (basic and acidic residues). A disordered region spans residues 1–53 (MQRVSFEVKDTEAEKSSSEILSGSLPSTYRNPAMENVGNAVDDGSSVKNNPKL). Topologically, residues 1–303 (MQRVSFEVKD…RFFVLDSWQR (303 aa)) are cytoplasmic. Residues 18 to 27 (SEILSGSLPS) show a composition bias toward low complexity. EF-hand-like stretches follow at residues 118 to 128 (TANTDGLLLRS) and 153 to 164 (SHLKGDVITETE). EF-hand domains are found at residues 176–211 (SFDS…SSSA) and 220–255 (KADE…AETK). 5 residues coordinate Ca(2+): aspartate 189, aspartate 191, aspartate 193, arginine 195, and glutamate 200. A Phosphoserine modification is found at serine 270. A helical membrane pass occupies residues 304-324 (VWVIALWLTIMAILFAYKYIQ). Topologically, residues 325 to 392 (YKNRAVYEVL…LNFHKVIAVG (68 aa)) are extracellular. The 161-residue stretch at 342 to 502 (KGAAETLKLN…LFVIVYILLV (161 aa)) folds into the Ferric oxidoreductase domain. A helical transmembrane segment spans residues 393-409 (IAIGVAIHSVSHLACDF). Over 410-444 (PLLIAATPAEYMPLGKFFGEEQPKRYLHFVKSTEG) the chain is Cytoplasmic. Residues 445-465 (ITGLVMVFLMVIAFTLAMPWF) form a helical membrane-spanning segment. The Extracellular segment spans residues 466–489 (RRGKLEKKLPGPLKKLASFNAFWY). A helical transmembrane segment spans residues 490-510 (THHLFVIVYILLVLHGYYIYL). The Cytoplasmic segment spans residues 511–518 (NKEWYKKT). Residues 519 to 536 (TWMYLAVPVALYAYERLI) traverse the membrane as a helical segment. At 537-659 (RAFRSSIRTV…PYGAPAQDYK (123 aa)) the chain is on the extracellular side. Residues 541-657 (SSIRTVKVLK…DGPYGAPAQD (117 aa)) enclose the FAD-binding FR-type domain. A helical transmembrane segment spans residues 660–680 (KYEVVLLIGLGIGATPMISII). The Cytoplasmic segment spans residues 681–849 (KDIINNTETK…TRFSFHKENF (169 aa)).

Belongs to the RBOH (TC 5.B.1.3) family. As to quaternary structure, monomer and homodimer.

The protein resides in the membrane. In terms of biological role, calcium-dependent NADPH oxidase that generates superoxide. This Arabidopsis thaliana (Mouse-ear cress) protein is Putative respiratory burst oxidase homolog protein G (RBOHG).